A 539-amino-acid chain; its full sequence is Chaperonin GroEL (539 aa).

Residues 29-32, 86-90, Gly413, 477-479, and Asp493 contribute to the ATP site; these read TLGP, DGTTT, and DAL.

It belongs to the chaperonin (HSP60) family. Forms a cylinder of 14 subunits composed of two heptameric rings stacked back-to-back. Interacts with the co-chaperonin GroES.

The protein resides in the cytoplasm. It carries out the reaction ATP + H2O + a folded polypeptide = ADP + phosphate + an unfolded polypeptide.. Together with its co-chaperonin GroES, plays an essential role in assisting protein folding. The GroEL-GroES system forms a nano-cage that allows encapsulation of the non-native substrate proteins and provides a physical environment optimized to promote and accelerate protein folding. The polypeptide is Chaperonin GroEL (Clostridium perfringens (strain ATCC 13124 / DSM 756 / JCM 1290 / NCIMB 6125 / NCTC 8237 / Type A)).